The following is a 363-amino-acid chain: Protein RecA (363 aa).

Residue 79-86 coordinates ATP; that stretch reads GPESSGKT.

This sequence belongs to the RecA family.

It is found in the cytoplasm. Can catalyze the hydrolysis of ATP in the presence of single-stranded DNA, the ATP-dependent uptake of single-stranded DNA by duplex DNA, and the ATP-dependent hybridization of homologous single-stranded DNAs. It interacts with LexA causing its activation and leading to its autocatalytic cleavage. This Methylobacterium radiotolerans (strain ATCC 27329 / DSM 1819 / JCM 2831 / NBRC 15690 / NCIMB 10815 / 0-1) protein is Protein RecA.